Here is a 749-residue protein sequence, read N- to C-terminus: NAD(P)H-quinone oxidoreductase subunit 5, chloroplastic (749 aa).

16 consecutive transmembrane segments (helical) span residues 9 to 29 (WIIP…LLLF), 40 to 60 (WSFT…NLSI), 89 to 109 (IDPL…MVLI), 125 to 145 (FAYM…SNLI), 147 to 167 (IYIF…FWFT), 185 to 205 (GDFG…SFEF), 221 to 241 (NGTN…GAVA), 260 to 280 (TPIS…FLVA), 285 to 305 (LFIV…ITIL), 329 to 349 (LGYT…FHLI), 356 to 376 (ALLF…VGYS), 398 to 418 (NTFL…CFWS), 427 to 447 (WLYS…TAFY), 553 to 573 (LFPL…GIPF), 607 to 627 (FVIN…LASL), and 727 to 747 (SYLF…YFFL).

Belongs to the complex I subunit 5 family. NDH is composed of at least 16 different subunits, 5 of which are encoded in the nucleus.

Its subcellular location is the plastid. The protein localises to the chloroplast thylakoid membrane. It catalyses the reaction a plastoquinone + NADH + (n+1) H(+)(in) = a plastoquinol + NAD(+) + n H(+)(out). The catalysed reaction is a plastoquinone + NADPH + (n+1) H(+)(in) = a plastoquinol + NADP(+) + n H(+)(out). Its function is as follows. NDH shuttles electrons from NAD(P)H:plastoquinone, via FMN and iron-sulfur (Fe-S) centers, to quinones in the photosynthetic chain and possibly in a chloroplast respiratory chain. The immediate electron acceptor for the enzyme in this species is believed to be plastoquinone. Couples the redox reaction to proton translocation, and thus conserves the redox energy in a proton gradient. This chain is NAD(P)H-quinone oxidoreductase subunit 5, chloroplastic (ndhF), found in Vitis vinifera (Grape).